The primary structure comprises 342 residues: Arginase 1, mitochondrial (342 aa).

The N-terminal 22 residues, 1–22 (MSRIIGRKGINYIHRLNSASFT), are a transit peptide targeting the mitochondrion. Residues serine 77 and 96–99 (GSTN) each bind L-ornithine. 4 residues coordinate Mn(2+): histidine 161, aspartate 185, histidine 187, and aspartate 189. 189 to 191 (DIY) is an L-ornithine binding site. Residue 195–197 (EGN) participates in substrate binding. Serine 224 is a binding site for L-ornithine. Mn(2+) contacts are provided by aspartate 270 and aspartate 272. Glutamate 313 serves as a coordination point for substrate.

This sequence belongs to the arginase family. In terms of assembly, forms homohexamers. It depends on Mn(2+) as a cofactor. Expressed in vasculature of roots, root tips, cotyledons, leaves, cauline leaves, stems, sepals and pollen.

It localises to the mitochondrion. It catalyses the reaction L-arginine + H2O = urea + L-ornithine. It carries out the reaction agmatine + H2O = urea + putrescine. The protein operates within nitrogen metabolism; urea cycle; L-ornithine and urea from L-arginine: step 1/1. Its pathway is amine and polyamine biosynthesis; putrescine biosynthesis via agmatine pathway; putrescine from agmatine: step 1/1. Functionally, catalyzes the hydrolysis of L-arginine to urea and L-ornithine. The latter can be utilized in the urea cycle or as a precursor for the synthesis of both polyamines and proline. Possesses agmatinase activity. Catalyzes the formation of putrescine from agmatine. The chain is Arginase 1, mitochondrial from Arabidopsis thaliana (Mouse-ear cress).